A 194-amino-acid polypeptide reads, in one-letter code: Inosine triphosphate pyrophosphatase (194 aa).

N-acetylalanine is present on Ala2. 14–19 (TGNAKK) lines the ITP pocket. Residue Glu44 participates in Mg(2+) binding. ITP-binding positions include Lys56, 72 to 73 (DT), Lys89, 149 to 152 (FGWD), Lys172, and 177 to 178 (HR).

The protein belongs to the HAM1 NTPase family. In terms of assembly, homodimer. Mg(2+) serves as cofactor. As to expression, ubiquitous. Highly expressed in heart, liver, sex glands, thyroid and adrenal gland.

It is found in the cytoplasm. It catalyses the reaction ITP + H2O = IMP + diphosphate + H(+). The catalysed reaction is dITP + H2O = dIMP + diphosphate + H(+). It carries out the reaction XTP + H2O = XMP + diphosphate + H(+). The enzyme catalyses N(6)-hydroxy-dATP + H2O = N(6)-hydroxy-dAMP + diphosphate + H(+). Functionally, pyrophosphatase that hydrolyzes the non-canonical purine nucleotides inosine triphosphate (ITP), deoxyinosine triphosphate (dITP) as well as 2'-deoxy-N-6-hydroxylaminopurine triphosphate (dHAPTP) and xanthosine 5'-triphosphate (XTP) to their respective monophosphate derivatives. The enzyme does not distinguish between the deoxy- and ribose forms. Probably excludes non-canonical purines from RNA and DNA precursor pools, thus preventing their incorporation into RNA and DNA and avoiding chromosomal lesions. The protein is Inosine triphosphate pyrophosphatase of Homo sapiens (Human).